We begin with the raw amino-acid sequence, 298 residues long: ATP synthase gamma chain (298 aa).

This sequence belongs to the ATPase gamma chain family. F-type ATPases have 2 components, CF(1) - the catalytic core - and CF(0) - the membrane proton channel. CF(1) has five subunits: alpha(3), beta(3), gamma(1), delta(1), epsilon(1). CF(0) has three main subunits: a, b and c.

It is found in the cell membrane. Its function is as follows. Produces ATP from ADP in the presence of a proton gradient across the membrane. The gamma chain is believed to be important in regulating ATPase activity and the flow of protons through the CF(0) complex. The protein is ATP synthase gamma chain of Mycobacterium leprae (strain Br4923).